A 263-amino-acid chain; its full sequence is Oxygen-evolving enhancer protein 2, chloroplastic (263 aa).

A chloroplast-targeting transit peptide spans 1–78 (MAAASCFHAL…VGTKVSPADA (78 aa)). Residues 14–30 (ARSSSSSLQSSSSRLPA) are compositionally biased toward low complexity. The interval 14–34 (ARSSSSSLQSSSSRLPAPIKP) is disordered.

This sequence belongs to the PsbP family.

Its subcellular location is the plastid. The protein resides in the chloroplast thylakoid membrane. Functionally, may be involved in the regulation of photosystem II. The chain is Oxygen-evolving enhancer protein 2, chloroplastic from Helianthus annuus (Common sunflower).